We begin with the raw amino-acid sequence, 310 residues long: Ornithine carbamoyltransferase (310 aa).

Carbamoyl phosphate-binding positions include 57 to 60, Gln-84, Arg-108, and 135 to 138; these read STRT and HPCQ. L-ornithine-binding positions include Asn-166, Asp-229, and 233 to 234; that span reads SM. Carbamoyl phosphate is bound by residues 269–270 and Arg-297; that span reads CL.

The protein belongs to the aspartate/ornithine carbamoyltransferase superfamily. OTCase family.

It localises to the cytoplasm. It carries out the reaction carbamoyl phosphate + L-ornithine = L-citrulline + phosphate + H(+). It participates in amino-acid biosynthesis; L-arginine biosynthesis; L-arginine from L-ornithine and carbamoyl phosphate: step 1/3. Functionally, reversibly catalyzes the transfer of the carbamoyl group from carbamoyl phosphate (CP) to the N(epsilon) atom of ornithine (ORN) to produce L-citrulline. The protein is Ornithine carbamoyltransferase of Thermosynechococcus vestitus (strain NIES-2133 / IAM M-273 / BP-1).